The chain runs to 282 residues: 3-oxoadipate CoA-transferase subunit A (282 aa).

This sequence belongs to the 3-oxoacid CoA-transferase subunit A family. As to quaternary structure, heterotetramer composed of 2 A and 2 B subunits.

The enzyme catalyses 3-oxoadipate + succinyl-CoA = 3-oxoadipyl-CoA + succinate. It participates in aromatic compound metabolism; beta-ketoadipate pathway; acetyl-CoA and succinyl-CoA from 3-oxoadipate: step 1/2. In terms of biological role, catalyzes the CoA transfer from succinate to 3-oxoadipate (beta-ketoadipate). The sequence is that of 3-oxoadipate CoA-transferase subunit A (catI) from Pseudomonas knackmussii (strain DSM 6978 / CCUG 54928 / LMG 23759 / B13).